Reading from the N-terminus, the 356-residue chain is Phospho-N-acetylmuramoyl-pentapeptide-transferase (356 aa).

The next 10 membrane-spanning stretches (helical) occupy residues 4-24 (ILLA…WFIH), 53-73 (GGAV…LVTW), 76-96 (PSIS…IGFL), 116-136 (LLGQ…FPDV), 152-172 (ISWL…LIAG), 186-206 (LATG…IWQF), 228-248 (DIAV…WWNA), 253-273 (IFLG…MAVV), 278-298 (LLLV…MLQV), and 333-353 (FWII…AEWV).

It belongs to the glycosyltransferase 4 family. MraY subfamily. Requires Mg(2+) as cofactor.

It is found in the cell membrane. It catalyses the reaction UDP-N-acetyl-alpha-D-muramoyl-L-alanyl-gamma-D-glutamyl-meso-2,6-diaminopimeloyl-D-alanyl-D-alanine + di-trans,octa-cis-undecaprenyl phosphate = di-trans,octa-cis-undecaprenyl diphospho-N-acetyl-alpha-D-muramoyl-L-alanyl-D-glutamyl-meso-2,6-diaminopimeloyl-D-alanyl-D-alanine + UMP. Its pathway is cell wall biogenesis; peptidoglycan biosynthesis. Catalyzes the initial step of the lipid cycle reactions in the biosynthesis of the cell wall peptidoglycan: transfers peptidoglycan precursor phospho-MurNAc-pentapeptide from UDP-MurNAc-pentapeptide onto the lipid carrier undecaprenyl phosphate, yielding undecaprenyl-pyrophosphoryl-MurNAc-pentapeptide, known as lipid I. This chain is Phospho-N-acetylmuramoyl-pentapeptide-transferase, found in Cutibacterium acnes (strain DSM 16379 / KPA171202) (Propionibacterium acnes).